The chain runs to 414 residues: ORC1-type DNA replication protein 1 (414 aa).

Residues 70–74, Y213, and R225 each bind ATP; that span reads TGKTA.

The protein belongs to the CDC6/cdc18 family.

Functionally, involved in regulation of DNA replication. The protein is ORC1-type DNA replication protein 1 (cdc6-1) of Methanosarcina acetivorans (strain ATCC 35395 / DSM 2834 / JCM 12185 / C2A).